Consider the following 182-residue polypeptide: Inner membrane-spanning protein YciB (182 aa).

5 consecutive transmembrane segments (helical) span residues 22 to 42 (IYIASGALIAATALQLIVTYA), 50 to 70 (MHLITFVMVTFFGTLTLIFHD), 72 to 92 (AFIKWKVTVVYALFAIALAVS), 118 to 138 (VTWYWVSFFVACGLVNIYVAF), and 148 to 168 (FKVFGLTALTLINTVITVVYL).

This sequence belongs to the YciB family.

It localises to the cell inner membrane. Its function is as follows. Plays a role in cell envelope biogenesis, maintenance of cell envelope integrity and membrane homeostasis. The sequence is that of Inner membrane-spanning protein YciB from Shewanella woodyi (strain ATCC 51908 / MS32).